Consider the following 702-residue polypeptide: Polyribonucleotide nucleotidyltransferase 3 (702 aa).

Mg(2+)-binding residues include D483 and D489. In terms of domain architecture, KH spans 550 to 609; the sequence is PKVTQIKVHPDKVREVIGAGGKVINKIIDETGCKITIENDGTIYVAAPDQESSRRAVEMI. One can recognise an S1 motif domain in the interval 619–687; the sequence is GEVYTGKVIK…PQGKIGLSRK (69 aa).

Belongs to the polyribonucleotide nucleotidyltransferase family. Requires Mg(2+) as cofactor.

It is found in the cytoplasm. It catalyses the reaction RNA(n+1) + phosphate = RNA(n) + a ribonucleoside 5'-diphosphate. In terms of biological role, involved in mRNA degradation. Catalyzes the phosphorolysis of single-stranded polyribonucleotides processively in the 3'- to 5'-direction. The sequence is that of Polyribonucleotide nucleotidyltransferase 3 from Alkaliphilus metalliredigens (strain QYMF).